A 1194-amino-acid chain; its full sequence is Probable disease resistance protein RPP1 (1194 aa).

The tract at residues 1–27 (MGSVMSLGCSKRKATNQDVDSESRKRR) is disordered. The TIR domain maps to 96–260 (WKHDVFPSFH…KISTDVSNML (165 aa)). 105–110 (HGADVR) is a binding site for NAD(+). E171 is an active-site residue. Residues 280-535 (DMLEQLLRLD…ACLFNGESTT (256 aa)) form the NB-ARC domain. LRR repeat units lie at residues 623 to 647 (LSNTEEELNISEKVLERVHDFHFVR), 658 to 681 (QLALQDLIYHSPKIRSLNWYGYES), 690 to 713 (PEFLVELDMRSSNLRKLWEGTKQL), 714 to 737 (RNLKWMDLSYSSYLKELPNLSTAT), 739 to 760 (LEELKLRNCSSLVELPSSIEKL), 761 to 784 (TSLQILDLENCSSLEKLPAIENAT), 786 to 807 (LRELKLQNCSSLIELPLSIGTA), 808 to 831 (TNLKQLNISGCSSLVKLPSSIGDI), 832 to 855 (TDLEVFDLSNCSSLVTLPSSIGNL), 866 to 878 (CSKLEALPININL), 879 to 899 (KSLDTLNLTDCSQLKSFPEIS), 900 to 922 (THISELRLKGTAIKEVPLSIMSW), 943 to 965 (FDIITKLHLSKDIQEVPPWVKRM), and 966 to 991 (SRLRDLSLNNCNNLVSLPQLSDSLDY). The segment at 1170-1194 (RRSSSPDLSPESSRVSSYDHCLRGD) is disordered. The segment covering 1171 to 1185 (RSSSPDLSPESSRVS) has biased composition (low complexity).

This sequence belongs to the disease resistance TIR-NB-LRR family.

The catalysed reaction is NAD(+) + H2O = ADP-D-ribose + nicotinamide + H(+). TIR-NB-LRR receptor-like protein that confers resistance to the pathogen Hyaloperonospora arabidopsis. Probably acts as a NAD(+) hydrolase (NADase): in response to activation, catalyzes cleavage of NAD(+) into ADP-D-ribose (ADPR) and nicotinamide; NAD(+) cleavage triggering a defense system that promotes cell death. The polypeptide is Probable disease resistance protein RPP1 (Arabidopsis thaliana (Mouse-ear cress)).